Here is a 295-residue protein sequence, read N- to C-terminus: Glutamyl-Q tRNA(Asp) synthetase (295 aa).

L-glutamate-binding positions include 5 to 9 and Glu41; that span reads RFAPS. The short motif at 8–18 is the 'HIGH' region element; the sequence is PSPTGLLHIGS. 4 residues coordinate Zn(2+): Cys97, Cys99, Tyr117, and Cys121. Residues Tyr178 and Arg196 each contribute to the L-glutamate site. The 'KMSKS' region signature appears at 234 to 238; the sequence is KWSKQ. ATP is bound at residue Lys237.

The protein belongs to the class-I aminoacyl-tRNA synthetase family. GluQ subfamily. Requires Zn(2+) as cofactor.

Functionally, catalyzes the tRNA-independent activation of glutamate in presence of ATP and the subsequent transfer of glutamate onto a tRNA(Asp). Glutamate is transferred on the 2-amino-5-(4,5-dihydroxy-2-cyclopenten-1-yl) moiety of the queuosine in the wobble position of the QUC anticodon. The polypeptide is Glutamyl-Q tRNA(Asp) synthetase (Neisseria meningitidis serogroup C (strain 053442)).